A 357-amino-acid polypeptide reads, in one-letter code: Protein RecA (357 aa).

Gly73–Thr80 provides a ligand contact to ATP.

It belongs to the RecA family.

Its subcellular location is the cytoplasm. Can catalyze the hydrolysis of ATP in the presence of single-stranded DNA, the ATP-dependent uptake of single-stranded DNA by duplex DNA, and the ATP-dependent hybridization of homologous single-stranded DNAs. It interacts with LexA causing its activation and leading to its autocatalytic cleavage. The polypeptide is Protein RecA (Methylibium petroleiphilum (strain ATCC BAA-1232 / LMG 22953 / PM1)).